A 411-amino-acid chain; its full sequence is Growth-regulating factor 7 (411 aa).

In terms of domain architecture, QLQ spans Pro-38–Arg-73. The WRC domain maps to Asp-108 to Gly-152. Short sequence motifs (bipartite nuclear localization signal) lie at residues Arg-113 to Arg-123 and Arg-141 to Lys-148. The segment at Phe-333 to Pro-369 is disordered. The segment covering His-360–Pro-369 has biased composition (polar residues).

It belongs to the GRF family.

It localises to the nucleus. In terms of biological role, transcription activator that plays a regulatory role in gibberellin-induced stem elongation. This is Growth-regulating factor 7 (GRF7) from Oryza sativa subsp. japonica (Rice).